The sequence spans 42 residues: Photosystem I reaction center subunit IX (42 aa).

A helical membrane pass occupies residues 7-27 (YLSTAPVLATIWFIILAGLLI).

It belongs to the PsaJ family.

Its subcellular location is the plastid. The protein resides in the chloroplast thylakoid membrane. Functionally, may help in the organization of the PsaE and PsaF subunits. The chain is Photosystem I reaction center subunit IX from Mesostigma viride (Green alga).